A 174-amino-acid chain; its full sequence is Large ribosomal subunit protein uL10 (174 aa).

The protein belongs to the universal ribosomal protein uL10 family. Part of the ribosomal stalk of the 50S ribosomal subunit. The N-terminus interacts with L11 and the large rRNA to form the base of the stalk. The C-terminus forms an elongated spine to which L12 dimers bind in a sequential fashion forming a multimeric L10(L12)X complex.

Functionally, forms part of the ribosomal stalk, playing a central role in the interaction of the ribosome with GTP-bound translation factors. The chain is Large ribosomal subunit protein uL10 from Desulfovibrio desulfuricans (strain ATCC 27774 / DSM 6949 / MB).